The following is a 1291-amino-acid chain: Histone-lysine N-methyltransferase SETDB1 (1291 aa).

Positions 18-64 form a coiled coil; that stretch reads ESEEIAELQQAVVEELGISMEELRHFIDEELEKMDCVQQRKKQLAEL. Residues 108-147 are disordered; it reads RDSSSEDESSRPTEIIEIPDEDDDVLSIDSGDAGSRTPKD. Ser112 and Ser117 each carry phosphoserine. Thr120 is subject to Phosphothreonine. The span at 124–133 shows a compositional bias: acidic residues; that stretch reads EIPDEDDDVL. Lys182 participates in a covalent cross-link: Glycyl lysine isopeptide (Lys-Gly) (interchain with G-Cter in SUMO2); alternate. Lys182 participates in a covalent cross-link: Glycyl lysine isopeptide (Lys-Gly) (interchain with G-Cter in ubiquitin); alternate. Tudor domains lie at 257-320 and 347-403; these read KLYV…LKKT and LLKS…SMKT. A disordered region spans residues 404-545; the sequence is SSASALEKKQ…APAPSALPAP (142 aa). Residues 433–444 are compositionally biased toward polar residues; that stretch reads QYTQDLTGTGTQ. Residues 448–468 show a composition bias toward pro residues; that stretch reads VEPPQPTAPPAPPFPPAPPLS. Positions 477–515 are enriched in polar residues; it reads ESQLAQSRKQVAKKSTSFRPGSVGSGHSSPTSPALSENV. Residues 528-539 are compositionally biased toward low complexity; it reads SPLGSTASAPAP. Positions 594-665 constitute an MBD domain; it reads YRGKNPLLVP…EMFCLDPYVL (72 aa). Positions 727–800 constitute a Pre-SET domain; that stretch reads VGCDCKDGCR…MCTNRLVQHG (74 aa). Residues Cys729, Cys731, Cys735, Cys741, Cys743, Cys781, Cys785, Cys787, and Cys792 each contribute to the Zn(2+) site. The region spanning 803–1266 is the SET domain; sequence VRLQLFKTQN…AGTELTWDYN (464 aa). Residues 813 to 815, Asp851, and Tyr853 each bind S-adenosyl-L-methionine; that span reads KGW. A Glycyl lysine isopeptide (Lys-Gly) (interchain with G-Cter in ubiquitin) cross-link involves residue Lys867. Positions 868–1160 are disordered; sequence EGYESDAPCS…MTGPMKRQVA (293 aa). Acidic residues predominate over residues 896 to 907; it reads EDPEESNDDSSD. Positions 951–963 are enriched in pro residues; sequence DLGPPHIPVPPSI. The residue at position 1025 (Ser1025) is a Phosphoserine. Over residues 1031–1050 the composition is skewed to basic and acidic residues; it reads IKDEGDIKQAKKEDTDDRNK. Lys1032 participates in a covalent cross-link: Glycyl lysine isopeptide (Lys-Gly) (interchain with G-Cter in SUMO2); alternate. A Glycyl lysine isopeptide (Lys-Gly) (interchain with G-Cter in SUMO1); alternate cross-link involves residue Lys1032. Residue Lys1038 forms a Glycyl lysine isopeptide (Lys-Gly) (interchain with G-Cter in SUMO2) linkage. Polar residues predominate over residues 1052 to 1063; that stretch reads SVVTESSRNYGY. Phosphoserine is present on Ser1066. Lys1069 participates in a covalent cross-link: Glycyl lysine isopeptide (Lys-Gly) (interchain with G-Cter in SUMO2). Residues 1100 to 1115 are compositionally biased toward low complexity; that stretch reads LTLSSSTESEGESGTS. The segment covering 1116-1140 has biased composition (polar residues); it reads RKPTAGQTSATAVDSDDIQTISSGS. Lys1149 participates in a covalent cross-link: Glycyl lysine isopeptide (Lys-Gly) (interchain with G-Cter in SUMO2). N6,N6,N6-trimethyllysine; alternate is present on residues Lys1170 and Lys1178. N6,N6-dimethyllysine; alternate occurs at positions 1170 and 1178. Residues Arg1220 and 1223 to 1224 contribute to the S-adenosyl-L-methionine site; that span reads NH. 4 residues coordinate Zn(2+): Cys1226, Cys1279, Cys1281, and Cys1286. In terms of domain architecture, Post-SET spans 1275–1291; that stretch reads KELLCCCGAIECRGRLL.

It belongs to the class V-like SAM-binding methyltransferase superfamily. Histone-lysine methyltransferase family. Suvar3-9 subfamily. In terms of assembly, part of a complex containing at least CDYL, REST, WIZ, SETDB1, EHMT1 and EHMT2. Forms a complex with ATRX, TRIM28 and ZNF274. Probably part of a corepressor complex containing ZNF304, TRIM28, SETDB1 and DNMT1. Interacts with TRIM28/TIF1B. Interacts with ATF7IP and ATF7IP2; the interaction with ATF7IP protects SETDB1 from proteasomal degradation and is required to stimulate histone methyltransferase activity and facilitate the conversion of dimethylated to trimethylated H3 'Lys-9'. Interacts with CBX1 and CBX5. Interacts with DNMT3A and DNMT3B. Interacts with SUMO2. Interacts with MPHOSPH8. Interacts with ERG. Interacts with HDAC1, HDAC2, SIN3A and SIN3B. Interacts with ATRX. Interacts with RESF1. Interacts with ZNF638. Interacts with TASOR. Interacts with ZNF263; recruited to the SIX3 promoter along with other proteins involved in chromatin modification and transcriptional corepression where it contributes to transcriptional repression. Interacts with PHF13; the interaction probably enhances SETDB1 chromatin-associated levels and activity. Interacts with VRK1. In terms of processing, degraded by the proteasome, shielded by interaction with ATF7IP. Monoubiquitinated at Lys-867 by E2 enzymes of the UBE2E family. The conjugated-Ub is protected from deubiquitination by the SET domain. Monoubiquitination at Lys-867 is required for catalytic activity, H3K9 methylation and endogenous retrovirus silencing. In terms of tissue distribution, widely expressed. High expression in testis.

The protein localises to the nucleus. It localises to the cytoplasm. Its subcellular location is the chromosome. The enzyme catalyses N(6),N(6)-dimethyl-L-lysyl(9)-[histone H3] + S-adenosyl-L-methionine = N(6),N(6),N(6)-trimethyl-L-lysyl(9)-[histone H3] + S-adenosyl-L-homocysteine + H(+). Its function is as follows. Histone methyltransferase that specifically trimethylates 'Lys-9' of histone H3. H3 'Lys-9' trimethylation represents a specific tag for epigenetic transcriptional repression by recruiting HP1 (CBX1, CBX3 and/or CBX5) proteins to methylated histones. Mainly functions in euchromatin regions, thereby playing a central role in the silencing of euchromatic genes. H3 'Lys-9' trimethylation is coordinated with DNA methylation. Required for HUSH-mediated heterochromatin formation and gene silencing. Forms a complex with MBD1 and ATF7IP that represses transcription and couples DNA methylation and histone 'Lys-9' trimethylation. Its activity is dependent on MBD1 and is heritably maintained through DNA replication by being recruited by CAF-1. SETDB1 is targeted to histone H3 by TRIM28/TIF1B, a factor recruited by KRAB zinc-finger proteins. Probably forms a corepressor complex required for activated KRAS-mediated promoter hypermethylation and transcriptional silencing of tumor suppressor genes (TSGs) or other tumor-related genes in colorectal cancer (CRC) cells. Required to maintain a transcriptionally repressive state of genes in undifferentiated embryonic stem cells (ESCs). In ESCs, in collaboration with TRIM28, is also required for H3K9me3 and silencing of endogenous and introduced retroviruses in a DNA-methylation independent-pathway. Associates at promoter regions of tumor suppressor genes (TSGs) leading to their gene silencing. The SETDB1-TRIM28-ZNF274 complex may play a role in recruiting ATRX to the 3'-exons of zinc-finger coding genes with atypical chromatin signatures to establish or maintain/protect H3K9me3 at these transcriptionally active regions. In Homo sapiens (Human), this protein is Histone-lysine N-methyltransferase SETDB1.